The chain runs to 303 residues: uncharacterized protein (303 aa).

Ser63 is modified (phosphoserine).

This sequence belongs to the HAD-like hydrolase superfamily.

It is found in the cytoplasm. The protein resides in the nucleus. This is an uncharacterized protein from Schizosaccharomyces pombe (strain 972 / ATCC 24843) (Fission yeast).